The following is a 192-amino-acid chain: Ethylene-responsive transcription factor ERF027 (192 aa).

A DNA-binding region (AP2/ERF) is located at residues 18–74 (VYRGIRCRSGKWVSEIREPRKTTRIWLGTYPMAEMAAAAYDVAAMALKGREAVLNFP). Disordered stretches follow at residues 104-132 (CEEGEEEKKAKEKKSSSSKSRARECHVDN) and 167-192 (APPSWMGSRPSDDSPENSNDEDLWGY). A compositionally biased stretch (acidic residues) spans 179 to 192 (DSPENSNDEDLWGY).

The protein belongs to the AP2/ERF transcription factor family. ERF subfamily.

The protein localises to the nucleus. Probably acts as a transcriptional activator. Binds to the GCC-box pathogenesis-related promoter element. May be involved in the regulation of gene expression by stress factors and by components of stress signal transduction pathways. The polypeptide is Ethylene-responsive transcription factor ERF027 (ERF027) (Arabidopsis thaliana (Mouse-ear cress)).